The chain runs to 36 residues: Protein YnfP (36 aa).

This is Protein YnfP from Escherichia coli (strain K12).